The following is a 404-amino-acid chain: S-adenosylmethionine synthase (404 aa).

ATP is bound at residue His17. Asp19 contacts Mg(2+). A K(+)-binding site is contributed by Glu45. Residues Glu58 and Gln101 each coordinate L-methionine. The interval 101-111 (QSPDINRGVDR) is flexible loop. Residues 172 to 174 (DAK), 246 to 247 (RF), Asp255, 261 to 262 (RK), Ala278, and Lys282 contribute to the ATP site. Asp255 lines the L-methionine pocket. Lys286 contacts L-methionine.

Belongs to the AdoMet synthase family. Homotetramer; dimer of dimers. Requires Mg(2+) as cofactor. It depends on K(+) as a cofactor.

The protein resides in the cytoplasm. It carries out the reaction L-methionine + ATP + H2O = S-adenosyl-L-methionine + phosphate + diphosphate. It participates in amino-acid biosynthesis; S-adenosyl-L-methionine biosynthesis; S-adenosyl-L-methionine from L-methionine: step 1/1. Catalyzes the formation of S-adenosylmethionine (AdoMet) from methionine and ATP. The overall synthetic reaction is composed of two sequential steps, AdoMet formation and the subsequent tripolyphosphate hydrolysis which occurs prior to release of AdoMet from the enzyme. The sequence is that of S-adenosylmethionine synthase from Chlorobaculum tepidum (strain ATCC 49652 / DSM 12025 / NBRC 103806 / TLS) (Chlorobium tepidum).